We begin with the raw amino-acid sequence, 200 residues long: Large ribosomal subunit protein uL4 (200 aa).

A disordered region spans residues 42–65; sequence TRAQKTRSEVSGGGAKPWRQKGTG.

Belongs to the universal ribosomal protein uL4 family. In terms of assembly, part of the 50S ribosomal subunit.

Functionally, one of the primary rRNA binding proteins, this protein initially binds near the 5'-end of the 23S rRNA. It is important during the early stages of 50S assembly. It makes multiple contacts with different domains of the 23S rRNA in the assembled 50S subunit and ribosome. Forms part of the polypeptide exit tunnel. The chain is Large ribosomal subunit protein uL4 from Vibrio vulnificus (strain CMCP6).